Reading from the N-terminus, the 102-residue chain is Large ribosomal subunit protein bL21 (102 aa).

This sequence belongs to the bacterial ribosomal protein bL21 family. In terms of assembly, part of the 50S ribosomal subunit. Contacts protein L20.

This protein binds to 23S rRNA in the presence of protein L20. The protein is Large ribosomal subunit protein bL21 of Sorangium cellulosum (strain So ce56) (Polyangium cellulosum (strain So ce56)).